Reading from the N-terminus, the 392-residue chain is Formate-dependent phosphoribosylglycinamide formyltransferase (392 aa).

N(1)-(5-phospho-beta-D-ribosyl)glycinamide-binding positions include 22-23 and E82; that span reads EL. ATP is bound by residues R114, K155, 160-165, 195-198, and E203; these read SSGKGQ and EGVV. The ATP-grasp domain occupies 119–308; the sequence is RLAAEELQLP…EFALHVRAFL (190 aa). Mg(2+)-binding residues include E267 and E279. Residues D286, K355, and 362–363 contribute to the N(1)-(5-phospho-beta-D-ribosyl)glycinamide site; that span reads RR.

Belongs to the PurK/PurT family. In terms of assembly, homodimer.

The enzyme catalyses N(1)-(5-phospho-beta-D-ribosyl)glycinamide + formate + ATP = N(2)-formyl-N(1)-(5-phospho-beta-D-ribosyl)glycinamide + ADP + phosphate + H(+). It functions in the pathway purine metabolism; IMP biosynthesis via de novo pathway; N(2)-formyl-N(1)-(5-phospho-D-ribosyl)glycinamide from N(1)-(5-phospho-D-ribosyl)glycinamide (formate route): step 1/1. Its function is as follows. Involved in the de novo purine biosynthesis. Catalyzes the transfer of formate to 5-phospho-ribosyl-glycinamide (GAR), producing 5-phospho-ribosyl-N-formylglycinamide (FGAR). Formate is provided by PurU via hydrolysis of 10-formyl-tetrahydrofolate. This is Formate-dependent phosphoribosylglycinamide formyltransferase from Escherichia coli O1:K1 / APEC.